The following is a 225-amino-acid chain: MSHTEVKLKIPFGNKLLDAVCLVPNKNIAYGIILTHGASGDMNLPHLMSLASHLASHGFFCLRFTCKGLNIVHRIKAYKAVLNYLKTSGEYKLAGVFLGGRSMGSRAAASVMCHTEPDDADDFVRGLICISYPLHHPKQQHKLRDEDLFRIKDPVLFVSGSADEMCEKNLLEKVAQKMQAPSKIHWIEKANHSMAVKGRSTNDVFKEINTQILFWIQEITEMDKK.

The chain is Testis-expressed protein 30 (Tex30) from Mus musculus (Mouse).